The sequence spans 378 residues: Decaprenyl-diphosphate synthase subunit 1 (378 aa).

Residues K72, R75, and H130 each contribute to the isopentenyl diphosphate site. Mg(2+) is bound by residues D137 and D141. R147 lines the isopentenyl diphosphate pocket.

This sequence belongs to the FPP/GGPP synthase family. Heterotetramer of 2 dps1 and 2 dlp1 subunits. It depends on Mg(2+) as a cofactor.

Its subcellular location is the mitochondrion. It carries out the reaction 7 isopentenyl diphosphate + (2E,6E)-farnesyl diphosphate = all-trans-decaprenyl diphosphate + 7 diphosphate. The protein operates within cofactor biosynthesis; ubiquinone biosynthesis. Its function is as follows. Supplies decaprenyl diphosphate, the precursor for the side chain of the isoprenoid quinones ubiquinone-10. This is Decaprenyl-diphosphate synthase subunit 1 (dps1) from Schizosaccharomyces pombe (strain 972 / ATCC 24843) (Fission yeast).